A 764-amino-acid polypeptide reads, in one-letter code: uncharacterized protein (764 aa).

This is an uncharacterized protein from Acanthamoeba polyphaga (Amoeba).